The primary structure comprises 78 residues: MSRVCQVTGKRPAVGNNRSHAKNATKRRFLPNLQTHRFWVESEKRFVKLRLTAKGMRIIDKKGIDVVLSEMRARGENV.

The disordered stretch occupies residues 1–25; the sequence is MSRVCQVTGKRPAVGNNRSHAKNAT.

Belongs to the bacterial ribosomal protein bL28 family.

The protein is Large ribosomal subunit protein bL28 of Aliivibrio salmonicida (strain LFI1238) (Vibrio salmonicida (strain LFI1238)).